The chain runs to 156 residues: Small ribosomal subunit protein uS7 (156 aa).

It belongs to the universal ribosomal protein uS7 family. In terms of assembly, part of the 30S ribosomal subunit. Contacts proteins S9 and S11.

Functionally, one of the primary rRNA binding proteins, it binds directly to 16S rRNA where it nucleates assembly of the head domain of the 30S subunit. Is located at the subunit interface close to the decoding center, probably blocks exit of the E-site tRNA. The sequence is that of Small ribosomal subunit protein uS7 from Pseudomonas entomophila (strain L48).